A 494-amino-acid polypeptide reads, in one-letter code: 4-trimethylaminobutyraldehyde dehydrogenase (494 aa).

Position 2 is an N-acetylserine (serine 2). Lysine 30 is subject to N6-acetyllysine; alternate. N6-succinyllysine; alternate is present on lysine 30. Lysine 59 carries the post-translational modification N6-succinyllysine. NAD(+) contacts are provided by residues lysine 180 and 232–236 (GSVPT). The Proton acceptor role is filled by glutamate 254. Cysteine 288 serves as the catalytic Nucleophile. Position 298 is an N6-acetyllysine (lysine 298). Residue lysine 303 is modified to N6-acetyllysine; alternate. Lysine 303 carries the post-translational modification N6-succinyllysine; alternate. Lysine 344 bears the N6-acetyllysine mark. NAD(+) is bound at residue glutamate 391.

Belongs to the aldehyde dehydrogenase family. In terms of assembly, homotetramer.

The protein resides in the cytoplasm. It localises to the cytosol. It carries out the reaction 4-(trimethylamino)butanal + NAD(+) + H2O = 4-(trimethylamino)butanoate + NADH + 2 H(+). The enzyme catalyses an aldehyde + NAD(+) + H2O = a carboxylate + NADH + 2 H(+). The catalysed reaction is 4-aminobutanal + NAD(+) + H2O = 4-aminobutanoate + NADH + 2 H(+). It catalyses the reaction formaldehyde + NAD(+) + H2O = formate + NADH + 2 H(+). It carries out the reaction acetaldehyde + NAD(+) + H2O = acetate + NADH + 2 H(+). The enzyme catalyses imidazole-4-acetaldehyde + NAD(+) + H2O = imidazole-4-acetate + NADH + 2 H(+). The catalysed reaction is acrolein + NAD(+) + H2O = acrylate + NADH + 2 H(+). It catalyses the reaction (5-hydroxyindol-3-yl)acetaldehyde + NAD(+) + H2O = (5-hydroxyindol-3-yl)acetate + NADH + 2 H(+). It carries out the reaction 3,4-dihydroxyphenylacetaldehyde + NAD(+) + H2O = 3,4-dihydroxyphenylacetate + NADH + 2 H(+). The enzyme catalyses spermine monoaldehyde + NAD(+) + H2O = N-(2-carboxyethyl)spermidine + NADH + 2 H(+). The catalysed reaction is propanal + NAD(+) + H2O = propanoate + NADH + 2 H(+). It catalyses the reaction butanal + NAD(+) + H2O = butanoate + NADH + 2 H(+). It carries out the reaction pentanal + NAD(+) + H2O = pentanoate + NADH + 2 H(+). The enzyme catalyses hexanal + NAD(+) + H2O = hexanoate + NADH + 2 H(+). It functions in the pathway amine and polyamine biosynthesis; carnitine biosynthesis. Functionally, converts gamma-trimethylaminobutyraldehyde into gamma-butyrobetaine with high efficiency (in vitro). Can catalyze the irreversible oxidation of a broad range of aldehydes to the corresponding acids in an NAD-dependent reaction, but with low efficiency. Catalyzes the oxidation of aldehydes arising from biogenic amines and polyamines. This chain is 4-trimethylaminobutyraldehyde dehydrogenase (ALDH9A1), found in Pongo abelii (Sumatran orangutan).